Reading from the N-terminus, the 211-residue chain is Protein-methionine-sulfoxide reductase heme-binding subunit MsrQ (211 aa).

Transmembrane regions (helical) follow at residues 10–30 (WLKVCLHLAGLLPFLWLVWAI), 82–102 (LWCFAWATLHLTSYALLELGV), 116–136 (PYLTLGIISWVILLALAFTST), 153–173 (FVYLVAILAPIHYLWSVKIIS), and 178–198 (IYAGLAVLLLALRYKKLLSLF).

Belongs to the MsrQ family. Heterodimer of a catalytic subunit (MsrP) and a heme-binding subunit (MsrQ). FMN is required as a cofactor. It depends on heme b as a cofactor.

The protein localises to the cell inner membrane. In terms of biological role, part of the MsrPQ system that repairs oxidized periplasmic proteins containing methionine sulfoxide residues (Met-O), using respiratory chain electrons. Thus protects these proteins from oxidative-stress damage caused by reactive species of oxygen and chlorine generated by the host defense mechanisms. MsrPQ is essential for the maintenance of envelope integrity under bleach stress, rescuing a wide series of structurally unrelated periplasmic proteins from methionine oxidation, including the primary periplasmic chaperone SurA and the lipoprotein Pal. MsrQ provides electrons for reduction to the reductase catalytic subunit MsrP, using the quinone pool of the respiratory chain. The sequence is that of Protein-methionine-sulfoxide reductase heme-binding subunit MsrQ from Escherichia coli (strain 55989 / EAEC).